A 346-amino-acid polypeptide reads, in one-letter code: S-adenosylmethionine:tRNA ribosyltransferase-isomerase (346 aa).

This sequence belongs to the QueA family. Monomer.

Its subcellular location is the cytoplasm. The enzyme catalyses 7-aminomethyl-7-carbaguanosine(34) in tRNA + S-adenosyl-L-methionine = epoxyqueuosine(34) in tRNA + adenine + L-methionine + 2 H(+). It participates in tRNA modification; tRNA-queuosine biosynthesis. Functionally, transfers and isomerizes the ribose moiety from AdoMet to the 7-aminomethyl group of 7-deazaguanine (preQ1-tRNA) to give epoxyqueuosine (oQ-tRNA). The chain is S-adenosylmethionine:tRNA ribosyltransferase-isomerase from Cereibacter sphaeroides (strain KD131 / KCTC 12085) (Rhodobacter sphaeroides).